Consider the following 159-residue polypeptide: Transcription antitermination protein NusB (159 aa).

The segment at 1–20 (MNKNTQGKPSGKPVRRDGVD) is disordered.

The protein belongs to the NusB family.

Functionally, involved in transcription antitermination. Required for transcription of ribosomal RNA (rRNA) genes. Binds specifically to the boxA antiterminator sequence of the ribosomal RNA (rrn) operons. The sequence is that of Transcription antitermination protein NusB from Stenotrophomonas maltophilia (strain R551-3).